Reading from the N-terminus, the 246-residue chain is Ubiquinone biosynthesis O-methyltransferase (246 aa).

S-adenosyl-L-methionine-binding residues include R40, G70, D91, and M135.

Belongs to the methyltransferase superfamily. UbiG/COQ3 family.

The enzyme catalyses a 3-demethylubiquinol + S-adenosyl-L-methionine = a ubiquinol + S-adenosyl-L-homocysteine + H(+). The catalysed reaction is a 3-(all-trans-polyprenyl)benzene-1,2-diol + S-adenosyl-L-methionine = a 2-methoxy-6-(all-trans-polyprenyl)phenol + S-adenosyl-L-homocysteine + H(+). Its pathway is cofactor biosynthesis; ubiquinone biosynthesis. In terms of biological role, O-methyltransferase that catalyzes the 2 O-methylation steps in the ubiquinone biosynthetic pathway. The chain is Ubiquinone biosynthesis O-methyltransferase from Colwellia psychrerythraea (strain 34H / ATCC BAA-681) (Vibrio psychroerythus).